The sequence spans 462 residues: Putative zinc metalloprotease RSc1411 (462 aa).

Residues M1–G21 traverse the membrane as a helical segment. A Zn(2+)-binding site is contributed by H18. The active site involves E19. Residue H22 coordinates Zn(2+). Residues F102–A124 form a helical membrane-spanning segment. The PDZ domain occupies T201–I283. 2 helical membrane passes run F386–P406 and W430–L450.

It belongs to the peptidase M50B family. Requires Zn(2+) as cofactor.

Its subcellular location is the cell inner membrane. The chain is Putative zinc metalloprotease RSc1411 from Ralstonia nicotianae (strain ATCC BAA-1114 / GMI1000) (Ralstonia solanacearum).